A 282-amino-acid chain; its full sequence is F-actin-capping protein subunit beta (282 aa).

The segment at 73 to 103 is disordered; it reads SPWSNQFDPPLDEAGSGGVGAGGNEGAGEGA. A compositionally biased stretch (gly residues) spans 87–101; that stretch reads GSGGVGAGGNEGAGE.

This sequence belongs to the F-actin-capping protein beta subunit family. As to quaternary structure, component of the F-actin capping complex, composed of a heterodimer of an alpha and a beta subunit.

Its subcellular location is the cytoplasm. The protein resides in the cytoskeleton. The protein localises to the actin patch. Functionally, F-actin-capping proteins bind in a Ca(2+)-independent manner to the fast growing ends of actin filaments (barbed end) thereby blocking the exchange of subunits at these ends. Unlike other capping proteins (such as gelsolin and severin), these proteins do not sever actin filaments. This chain is F-actin-capping protein subunit beta (CAP2), found in Gibberella zeae (strain ATCC MYA-4620 / CBS 123657 / FGSC 9075 / NRRL 31084 / PH-1) (Wheat head blight fungus).